A 155-amino-acid chain; its full sequence is Fibroblast growth factor 1 (155 aa).

The propeptide occupies 1-15 (MAEGDITTFNAITES). Position 33 (N33) interacts with heparin. The tract at residues 127–143 (KKNGASKKGSRTHYGQK) is heparin-binding.

It belongs to the heparin-binding growth factors family.

It localises to the secreted. It is found in the cytoplasm. Its subcellular location is the cell cortex. The protein localises to the cytosol. The protein resides in the nucleus. Its function is as follows. Plays an important role in the regulation of cell survival, cell division, angiogenesis, cell differentiation and cell migration. Functions as a potent mitogen in vitro. Acts as a ligand for FGFR1 and integrins. Binds to FGFR1 in the presence of heparin leading to FGFR1 dimerization and activation via sequential autophosphorylation on tyrosine residues which act as docking sites for interacting proteins, leading to the activation of several signaling cascades. Binds to integrins. Its binding to integrins and subsequent ternary complex formation with integrins and FGFR1 are essential for FGF1 signaling. This chain is Fibroblast growth factor 1 (fgf1), found in Xenopus laevis (African clawed frog).